Reading from the N-terminus, the 553-residue chain is CTP synthase (553 aa).

The segment at methionine 1–leucine 278 is amidoligase domain. CTP is bound at residue serine 25. Residue serine 25 participates in UTP binding. ATP-binding positions include serine 26 to leucine 31 and aspartate 83. Mg(2+) is bound by residues aspartate 83 and glutamate 152. CTP-binding positions include aspartate 159 to glutamate 161, lysine 199 to glutamine 204, and lysine 235. Residues lysine 199–glutamine 204 and lysine 235 contribute to the UTP site. Positions asparagine 303–alanine 552 constitute a Glutamine amidotransferase type-1 domain. Position 366 (glycine 366) interacts with L-glutamine. Cysteine 393 acts as the Nucleophile; for glutamine hydrolysis in catalysis. L-glutamine is bound by residues leucine 394–glutamine 397, glutamate 417, and arginine 478. Catalysis depends on residues histidine 525 and glutamate 527.

This sequence belongs to the CTP synthase family. Homotetramer.

It carries out the reaction UTP + L-glutamine + ATP + H2O = CTP + L-glutamate + ADP + phosphate + 2 H(+). The catalysed reaction is L-glutamine + H2O = L-glutamate + NH4(+). The enzyme catalyses UTP + NH4(+) + ATP = CTP + ADP + phosphate + 2 H(+). It functions in the pathway pyrimidine metabolism; CTP biosynthesis via de novo pathway; CTP from UDP: step 2/2. With respect to regulation, allosterically activated by GTP, when glutamine is the substrate; GTP has no effect on the reaction when ammonia is the substrate. The allosteric effector GTP functions by stabilizing the protein conformation that binds the tetrahedral intermediate(s) formed during glutamine hydrolysis. Inhibited by the product CTP, via allosteric rather than competitive inhibition. Catalyzes the ATP-dependent amination of UTP to CTP with either L-glutamine or ammonia as the source of nitrogen. Regulates intracellular CTP levels through interactions with the four ribonucleotide triphosphates. This is CTP synthase from Bifidobacterium longum (strain NCC 2705).